The primary structure comprises 341 residues: UDP-3-O-acylglucosamine N-acyltransferase (341 aa).

The active-site Proton acceptor is His-237.

This sequence belongs to the transferase hexapeptide repeat family. LpxD subfamily. In terms of assembly, homotrimer.

It catalyses the reaction a UDP-3-O-[(3R)-3-hydroxyacyl]-alpha-D-glucosamine + a (3R)-hydroxyacyl-[ACP] = a UDP-2-N,3-O-bis[(3R)-3-hydroxyacyl]-alpha-D-glucosamine + holo-[ACP] + H(+). It functions in the pathway bacterial outer membrane biogenesis; LPS lipid A biosynthesis. Catalyzes the N-acylation of UDP-3-O-acylglucosamine using 3-hydroxyacyl-ACP as the acyl donor. Is involved in the biosynthesis of lipid A, a phosphorylated glycolipid that anchors the lipopolysaccharide to the outer membrane of the cell. This chain is UDP-3-O-acylglucosamine N-acyltransferase, found in Azoarcus sp. (strain BH72).